Here is a 64-residue protein sequence, read N- to C-terminus: Translational regulator CsrA (64 aa).

It belongs to the CsrA/RsmA family. As to quaternary structure, homodimer; the beta-strands of each monomer intercalate to form a hydrophobic core, while the alpha-helices form wings that extend away from the core.

The protein localises to the cytoplasm. Its function is as follows. A key translational regulator that binds mRNA to regulate translation initiation and/or mRNA stability. Mediates global changes in gene expression, shifting from rapid growth to stress survival by linking envelope stress, the stringent response and the catabolite repression systems. Usually binds in the 5'-UTR; binding at or near the Shine-Dalgarno sequence prevents ribosome-binding, repressing translation, binding elsewhere in the 5'-UTR can activate translation and/or stabilize the mRNA. Its function is antagonized by small RNA(s). This is Translational regulator CsrA from Actinobacillus pleuropneumoniae serotype 5b (strain L20).